The sequence spans 147 residues: MSVLPPTLRENRRYVLFRIITLVNPTQKEVYRSMADSVSALFGDAGAAKMHPAVVWSEGEYAIARCTRGYEQSLIAALAVVTKVCGEPASFRSLATSGTILSLKKKVIPESIDDTTYPGYLCAGKKVNNLSKENGHRYLTRDDIIKE.

This sequence belongs to the eukaryotic/archaeal RNase P protein component 2 family. Consists of a catalytic RNA component and at least 4-5 protein subunits.

The protein resides in the cytoplasm. The catalysed reaction is Endonucleolytic cleavage of RNA, removing 5'-extranucleotides from tRNA precursor.. Part of ribonuclease P, a protein complex that generates mature tRNA molecules by cleaving their 5'-ends. This chain is Ribonuclease P protein component 2, found in Methanocorpusculum labreanum (strain ATCC 43576 / DSM 4855 / Z).